The following is an 841-amino-acid chain: Translation initiation factor IF-2 (841 aa).

Residues 87–254 are disordered; the sequence is RKKKVFVQRS…KRNAHGFQSP (168 aa). Residues 96–135 show a composition bias toward basic and acidic residues; sequence SPEEIEAERKREMDERRAVENAARQKAEEEAKRRAEEDAR. Positions 136 to 175 are enriched in low complexity; that stretch reads SQPAASQSAPAAAEPVAAAEPVREAAPAAAPAPASAAPSA. Composition is skewed to basic and acidic residues over residues 176–217 and 225–234; these read DARK…EKAP and TTDEESDSFR. Over residues 235-248 the composition is skewed to basic residues; it reads RGGRGKGKLKKRNA. Residues 341–510 enclose the tr-type G domain; sequence SRAPVVTVMG…LLQAEVLELK (170 aa). A G1 region spans residues 350–357; that stretch reads GHVDHGKT. Position 350–357 (350–357) interacts with GTP; it reads GHVDHGKT. The segment at 375–379 is G2; it reads GITQH. The G3 stretch occupies residues 396 to 399; it reads DTPG. GTP is bound by residues 396–400 and 450–453; these read DTPGH and NKID. The interval 450 to 453 is G4; the sequence is NKID. The interval 486–488 is G5; that stretch reads SAK.

The protein belongs to the TRAFAC class translation factor GTPase superfamily. Classic translation factor GTPase family. IF-2 subfamily.

The protein resides in the cytoplasm. One of the essential components for the initiation of protein synthesis. Protects formylmethionyl-tRNA from spontaneous hydrolysis and promotes its binding to the 30S ribosomal subunits. Also involved in the hydrolysis of GTP during the formation of the 70S ribosomal complex. In Pseudomonas syringae pv. syringae (strain B728a), this protein is Translation initiation factor IF-2.